Consider the following 506-residue polypeptide: MPQLGLLPGRAWTVLLGLLRPPPGALCIRAVRSHSQVAEALFASQLKPHQEKSNFTIKTPKGTRDLSPQQMVVREKILDVVVSCFKRHGAKGLDTPAFELKEILTEKYGEDSGLIYDLKDQGGELLSLRYDLTVPFARYLAMNKVKKMKRYHVGKVWRRESPTIVQGRYREFYQCDFDIAGQFDPMIPDAECLKIMCEILSGLHLGDFLIKVSDRRILDGIFAVCGVPESKFHAICSSVDKLDKISWKDVRHEMVVKKGLAPEVADRIGDYVQCHGGISLVEQMFQDPRLSQNKQALEGLGDLKLLFEYLTLFGVAEKVSFDLSLARGLDYYTGVIYEAVLLQTPVHAEEEPLNMGSVAAGGRYDGLVGMFDPRGHKVPCVGLSIGVERIFSIVEQRIKTFGEKIRTTETQVFVATPQKNFLQERLKLIAELWDAGIKAELMYKNNPKLLPQLHYCENMGIPLVVIIGEQELKEGVIKLRSVASREEVAIKRENLVAEIQKRLSES.

The N-terminal 33 residues, M1 to S33, are a transit peptide targeting the mitochondrion. S67 is subject to Phosphoserine. L-histidine is bound by residues D131–T133, R158, Q174, D178, R327, and Y331–Y332. K444 carries the N6-acetyllysine modification.

The protein belongs to the class-II aminoacyl-tRNA synthetase family. As to quaternary structure, homodimer.

It localises to the mitochondrion. The catalysed reaction is tRNA(His) + L-histidine + ATP = L-histidyl-tRNA(His) + AMP + diphosphate + H(+). Its function is as follows. Mitochondrial aminoacyl-tRNA synthetase that catalyzes the ATP-dependent ligation of histidine to the 3'-end of its cognate tRNA, via the formation of an aminoacyl-adenylate intermediate (His-AMP). The protein is Histidine--tRNA ligase, mitochondrial (HARS2) of Bos taurus (Bovine).